The sequence spans 207 residues: High mobility group protein B2 (207 aa).

DNA-binding regions (HMG box) lie at residues 9–79 (PRGK…KNYV) and 95–163 (PKRP…AAYR). Cysteine sulfonic acid (-SO3H); alternate occurs at positions 23 and 45. C23 and C45 are disulfide-bonded. The span at 52–76 (MSSKEKGKFEEMAKGDKARYDREMK) shows a compositional bias: basic and acidic residues. The segment at 52–102 (MSSKEKGKFEEMAKGDKARYDREMKNYVPPKGEKKGKKKDPNAPKRPPSAF) is disordered. C106 is modified (cysteine sulfonic acid (-SO3H)). A compositionally biased stretch (basic and acidic residues) spans 162–172 (YRAKSKSDAGK). Residues 162–207 (YRAKSKSDAGKKGPGRPAGSKKKAEPEEEEEEEEDEEEEEEEEDEE) form a disordered region. Over residues 187–207 (PEEEEEEEEDEEEEEEEEDEE) the composition is skewed to acidic residues.

This sequence belongs to the HMGB family. Reduction/oxidation of cysteine residues Cys-23, Cys-45 and Cys-106 and a possible intramolecular disulfide bond involving Cys-23 and Cys-45 give rise to different redox forms with specific functional activities in various cellular compartments: 1- fully reduced HMGB2 (HMGB2C23hC45hC106h), 2- disulfide HMGB2 (HMGB2C23-C45C106h) and 3- sulfonyl HMGB2 (HMGB2C23soC45soC106so).

The protein resides in the nucleus. It localises to the chromosome. Its subcellular location is the cytoplasm. The protein localises to the secreted. Multifunctional protein with various roles in different cellular compartments. May act in a redox sensitive manner. Associates with chromatin and binds DNA with a preference to non-canonical DNA structures such as single-stranded DNA. Can bent DNA and enhance DNA flexibility by looping thus providing a mechanism to promote activities on various gene promoters. Proposed to be involved in the innate immune response to nucleic acids by acting as a cytoplasmic promiscuous immunogenic DNA/RNA sensor. Involved in inflammatory response to antigenic stimulus coupled with pro-inflammatory activity. The chain is High mobility group protein B2 (HMGB2) from Gallus gallus (Chicken).